The sequence spans 185 residues: Protein OPG161 (185 aa).

Topologically, residues M1–I33 are intravirion. A helical transmembrane segment spans residues G34–I56. Residues V57–N185 lie on the Virion surface side of the membrane. Residues E98–N185 are C-type lectin-like domain. 2 N-linked (GlcNAc...) asparagine; by host glycosylation sites follow: N125 and N135.

Belongs to the orthopoxvirus OPG161 family. In terms of assembly, homodimer, disulfide-linked. Interacts with protein OPG190. Interacts (via C-terminus) with protein OPG164. Interacts with OPG162.

Its subcellular location is the virion membrane. It localises to the host membrane. Functionally, forms a complex with OPG162 and OPG190 to coordinate the incorporation of OPG164 into wrapped enveloped virion (EV) membranes and, subsequently, the production of actin tails. Therefore plays an essential role in efficient cell-to-cell spread of viral particles. The sequence is that of Protein OPG161 (OPG161) from Homo sapiens (Human).